Consider the following 218-residue polypeptide: UPF0598 protein C8orf82 homolog (218 aa).

This sequence belongs to the UPF0598 family.

This Bos taurus (Bovine) protein is UPF0598 protein C8orf82 homolog.